Consider the following 293-residue polypeptide: Diaminopimelate epimerase (293 aa).

Residues Asn-17, Gln-49, and Asn-69 each contribute to the substrate site. Cys-78 functions as the Proton donor in the catalytic mechanism. Residues 79–80 (GN), Asn-169, Asn-203, and 221–222 (ER) contribute to the substrate site. Cys-230 acts as the Proton acceptor in catalysis. Position 231-232 (231-232 (GS)) interacts with substrate.

It belongs to the diaminopimelate epimerase family. In terms of assembly, homodimer.

The protein localises to the cytoplasm. The enzyme catalyses (2S,6S)-2,6-diaminopimelate = meso-2,6-diaminopimelate. The protein operates within amino-acid biosynthesis; L-lysine biosynthesis via DAP pathway; DL-2,6-diaminopimelate from LL-2,6-diaminopimelate: step 1/1. In terms of biological role, catalyzes the stereoinversion of LL-2,6-diaminopimelate (L,L-DAP) to meso-diaminopimelate (meso-DAP), a precursor of L-lysine and an essential component of the bacterial peptidoglycan. The sequence is that of Diaminopimelate epimerase from Methylobacterium sp. (strain 4-46).